We begin with the raw amino-acid sequence, 269 residues long: 4-hydroxy-tetrahydrodipicolinate reductase (269 aa).

NAD(+) contacts are provided by residues 10–15 (GANGRM), E36, 99–101 (GTT), and 123–126 (AANF). H156 serves as the catalytic Proton donor/acceptor. (S)-2,3,4,5-tetrahydrodipicolinate is bound at residue H157. K160 serves as the catalytic Proton donor. 166 to 167 (GT) contacts (S)-2,3,4,5-tetrahydrodipicolinate.

It belongs to the DapB family.

The protein localises to the cytoplasm. It carries out the reaction (S)-2,3,4,5-tetrahydrodipicolinate + NAD(+) + H2O = (2S,4S)-4-hydroxy-2,3,4,5-tetrahydrodipicolinate + NADH + H(+). The catalysed reaction is (S)-2,3,4,5-tetrahydrodipicolinate + NADP(+) + H2O = (2S,4S)-4-hydroxy-2,3,4,5-tetrahydrodipicolinate + NADPH + H(+). Its pathway is amino-acid biosynthesis; L-lysine biosynthesis via DAP pathway; (S)-tetrahydrodipicolinate from L-aspartate: step 4/4. Functionally, catalyzes the conversion of 4-hydroxy-tetrahydrodipicolinate (HTPA) to tetrahydrodipicolinate. The sequence is that of 4-hydroxy-tetrahydrodipicolinate reductase from Neisseria meningitidis serogroup A / serotype 4A (strain DSM 15465 / Z2491).